The sequence spans 851 residues: Alanine--tRNA ligase (851 aa).

Zn(2+) contacts are provided by histidine 535, histidine 539, cysteine 637, and histidine 641.

This sequence belongs to the class-II aminoacyl-tRNA synthetase family. Zn(2+) is required as a cofactor.

It localises to the cytoplasm. The enzyme catalyses tRNA(Ala) + L-alanine + ATP = L-alanyl-tRNA(Ala) + AMP + diphosphate. Its function is as follows. Catalyzes the attachment of alanine to tRNA(Ala) in a two-step reaction: alanine is first activated by ATP to form Ala-AMP and then transferred to the acceptor end of tRNA(Ala). Also edits incorrectly charged Ser-tRNA(Ala) and Gly-tRNA(Ala) via its editing domain. The sequence is that of Alanine--tRNA ligase from Acholeplasma laidlawii (strain PG-8A).